Reading from the N-terminus, the 77-residue chain is U8-lycotoxin-Ls1w (77 aa).

Positions 1–20 (MKLIIFTGLVLFAIVSLIEA) are cleaved as a signal peptide. The propeptide occupies 21-26 (QAENEK).

The protein belongs to the neurotoxin 19 (CSTX) family. 08 (U8-Lctx) subfamily. In terms of processing, contains 4 disulfide bonds. In terms of tissue distribution, expressed by the venom gland.

The protein resides in the secreted. This is U8-lycotoxin-Ls1w from Lycosa singoriensis (Wolf spider).